A 340-amino-acid polypeptide reads, in one-letter code: Lipoyl synthase (340 aa).

Residues Cys83, Cys88, Cys94, Cys109, Cys113, Cys116, and Ser323 each contribute to the [4Fe-4S] cluster site. The Radical SAM core domain maps to 95 to 312 (FSGGTATFMI…AEEGYKMGFK (218 aa)).

The protein belongs to the radical SAM superfamily. Lipoyl synthase family. The cofactor is [4Fe-4S] cluster.

The protein resides in the cytoplasm. The enzyme catalyses [[Fe-S] cluster scaffold protein carrying a second [4Fe-4S](2+) cluster] + N(6)-octanoyl-L-lysyl-[protein] + 2 oxidized [2Fe-2S]-[ferredoxin] + 2 S-adenosyl-L-methionine + 4 H(+) = [[Fe-S] cluster scaffold protein] + N(6)-[(R)-dihydrolipoyl]-L-lysyl-[protein] + 4 Fe(3+) + 2 hydrogen sulfide + 2 5'-deoxyadenosine + 2 L-methionine + 2 reduced [2Fe-2S]-[ferredoxin]. The protein operates within protein modification; protein lipoylation via endogenous pathway; protein N(6)-(lipoyl)lysine from octanoyl-[acyl-carrier-protein]: step 2/2. In terms of biological role, catalyzes the radical-mediated insertion of two sulfur atoms into the C-6 and C-8 positions of the octanoyl moiety bound to the lipoyl domains of lipoate-dependent enzymes, thereby converting the octanoylated domains into lipoylated derivatives. The chain is Lipoyl synthase from Pseudomonas fluorescens (strain Pf0-1).